A 396-amino-acid chain; its full sequence is Serine/threonine-protein kinase VRK1 (396 aa).

The region spanning 37–317 is the Protein kinase domain; the sequence is WKVGLPIGQG…LLDYTEKPLY (281 aa). Residues 43–51 and K71 each bind ATP; that span reads IGQGGFGCI. K71 is covalently cross-linked (Glycyl lysine isopeptide (Lys-Gly) (interchain with G-Cter in SUMO2)). Residue D177 is the Proton acceptor of the active site. The residue at position 342 (S342) is a Phosphoserine; by PLK3. The interval 354–396 is disordered; the sequence is ITKKRKKEIEESKEPGVEDTEWSNTQTEEAIQTRSRTRKRVQK. T355 is subject to Phosphothreonine; by autocatalysis. Residues 360 to 369 are compositionally biased toward basic and acidic residues; that stretch reads KEIEESKEPG. Residues 375–387 show a composition bias toward polar residues; the sequence is WSNTQTEEAIQTR. The residue at position 376 (S376) is a Phosphoserine. T378 carries the phosphothreonine modification. Residues 387–393 form a required for interaction with the nucleosome region; sequence RSRTRKR.

This sequence belongs to the protein kinase superfamily. CK1 Ser/Thr protein kinase family. VRK subfamily. Interacts with HDAC1, KAT2B, SETDB1, KDM3A and KDM4A. Associates with the nucleosome through interactions with nucleosome DNA, histone H2A and histone H2B; the interaction with H2A and H2B is mediated by the nucleosome acidic patch, a cluster of negatively charged residues of H2A and H2B forming a cleft within the nucleosome core. In terms of assembly, (Microbial infection) Interacts with vaccinia protein B12; this interaction inhibits the repressive activity of the vaccinia virus B12 pseudokinase on viral replication factory formation. Autophosphorylated at various serine and threonine residues. Autophosphorylation does not impair its ability to phosphorylate p53/TP53. Phosphorylation by PLK3 leads to induction of Golgi fragmentation during mitosis. As to expression, widely expressed. Highly expressed in fetal liver, testis and thymus.

Its subcellular location is the nucleus. It is found in the cytoplasm. The protein localises to the cajal body. The enzyme catalyses L-seryl-[protein] + ATP = O-phospho-L-seryl-[protein] + ADP + H(+). The catalysed reaction is L-threonyl-[protein] + ATP = O-phospho-L-threonyl-[protein] + ADP + H(+). Its activity is regulated as follows. Active in presence of Mn(2+), Mg(2+) and Zn(2+), but is not functional with Ca(2+) or Cu(2+). Has a higher affinity for Mn(2+) than for Mg(2+). RAN inhibits its autophosphorylation and its ability to phosphorylate histone H3. Serine/threonine kinase involved in the regulation of key cellular processes including the cell cycle, nuclear condensation, transcription regulation, and DNA damage response. Controls chromatin organization and remodeling by mediating phosphorylation of histone H3 on 'Thr-4' and histone H2AX (H2aXT4ph). It also phosphorylates KAT5 in response to DNA damage, promoting KAT5 association with chromatin and histone acetyltransferase activity. Is involved in the regulation of cell cycle progression of neural progenitors, and is required for proper cortical neuronal migration. Is involved in neurite elongation and branching in motor neurons, and has an essential role in Cajal bodies assembly, acting through COIL phosphorylation and the control of coilin degradation. Involved in Golgi disassembly during the cell cycle: following phosphorylation by PLK3 during mitosis, it is required to induce Golgi fragmentation. Phosphorylates BANF1: disrupts its ability to bind DNA, reduces its binding to LEM domain-containing proteins and causes its relocalization from the nucleus to the cytoplasm. Phosphorylates TP53BP1 and p53/TP53 on 'Thr-18', preventing the interaction between p53/TP53 and MDM2. Phosphorylates ATF2 which activates its transcriptional activity. Phosphorylates JUN. This chain is Serine/threonine-protein kinase VRK1, found in Homo sapiens (Human).